We begin with the raw amino-acid sequence, 134 residues long: DNA-directed RNA polymerase subunit omega (134 aa).

Positions 76 to 102 are disordered; sequence EVDEPEPDPASMIAAGGAAAADSEEQD.

The protein belongs to the RNA polymerase subunit omega family. The RNAP catalytic core consists of 2 alpha, 1 beta, 1 beta' and 1 omega subunit. When a sigma factor is associated with the core the holoenzyme is formed, which can initiate transcription.

It carries out the reaction RNA(n) + a ribonucleoside 5'-triphosphate = RNA(n+1) + diphosphate. Functionally, promotes RNA polymerase assembly. Latches the N- and C-terminal regions of the beta' subunit thereby facilitating its interaction with the beta and alpha subunits. The polypeptide is DNA-directed RNA polymerase subunit omega (Rhizobium etli (strain ATCC 51251 / DSM 11541 / JCM 21823 / NBRC 15573 / CFN 42)).